We begin with the raw amino-acid sequence, 331 residues long: Heat-inducible transcription repressor HrcA (331 aa).

Belongs to the HrcA family.

In terms of biological role, negative regulator of class I heat shock genes (grpE-dnaK-dnaJ and groELS operons). Prevents heat-shock induction of these operons. In Synechococcus sp. (strain WH7803), this protein is Heat-inducible transcription repressor HrcA.